An 85-amino-acid chain; its full sequence is MKVTLIAILTCAAVLVLHTTAAEELEAESQLMEVGMPDTELAAVDEERLFECSFSCEIEKEGDKPCKKKKCKGGWKCKFNMCVKV.

The first 22 residues, Met1–Ala22, serve as a signal peptide directing secretion. The propeptide occupies Glu23–Arg48. Disulfide bonds link Cys52/Cys66, Cys56/Cys77, and Cys71/Cys82.

As to quaternary structure, heterodimer composed of the two variants Ile-58 and Gln-58. As to expression, expressed by the venom gland.

It is found in the secreted. Its function is as follows. Lethal neurotoxin that blocks neuromuscular transmission. Acts cooperatively to potentiate the activity of huwentoxin-I. This toxin is active against insects. The chain is U1-theraphotoxin-Hs1a from Cyriopagopus schmidti (Chinese bird spider).